The following is a 394-amino-acid chain: S-adenosylmethionine synthase (394 aa).

His-16 contacts ATP. Residue Asp-18 coordinates Mg(2+). Residue Glu-44 coordinates K(+). L-methionine contacts are provided by Glu-57 and Gln-99. A flexible loop region spans residues 99–109; it reads QSPDIAQGVDE. Residues 173 to 175, 240 to 241, Asp-249, 255 to 256, Ala-272, and Lys-276 contribute to the ATP site; these read DAK, RF, and RK. Residue Asp-249 coordinates L-methionine. Lys-280 lines the L-methionine pocket.

This sequence belongs to the AdoMet synthase family. As to quaternary structure, homotetramer; dimer of dimers. It depends on Mg(2+) as a cofactor. Requires K(+) as cofactor.

The protein resides in the cytoplasm. The enzyme catalyses L-methionine + ATP + H2O = S-adenosyl-L-methionine + phosphate + diphosphate. It participates in amino-acid biosynthesis; S-adenosyl-L-methionine biosynthesis; S-adenosyl-L-methionine from L-methionine: step 1/1. Its function is as follows. Catalyzes the formation of S-adenosylmethionine (AdoMet) from methionine and ATP. The overall synthetic reaction is composed of two sequential steps, AdoMet formation and the subsequent tripolyphosphate hydrolysis which occurs prior to release of AdoMet from the enzyme. The chain is S-adenosylmethionine synthase from Lacticaseibacillus paracasei (strain ATCC 334 / BCRC 17002 / CCUG 31169 / CIP 107868 / KCTC 3260 / NRRL B-441) (Lactobacillus paracasei).